Reading from the N-terminus, the 406-residue chain is E3 ubiquitin-protein ligase RING1 (406 aa).

Position 24 is a phosphothreonine (T24). Residues 30-234 (MDGTEIAVSP…GGAGSEDSGD (205 aa)) are necessary for transcriptional repression. Position 38 is a phosphoserine (S38). An RING-type zinc finger spans residues 48 to 88 (CPICLDMLKNTMTTKECLHRFCSDCIVTALRSGNKECPTCR). 3 positions are modified to phosphoserine: S140, S187, and S190. Disordered stretches follow at residues 151-263 (HRAQ…GEIE) and 309-354 (QQQE…PSLE). Positions 175 to 187 (EPGEGEGDGEDVS) are enriched in acidic residues. A Nuclear localization signal motif is present at residues 201–204 (KRPR). Residues 214 to 228 (GTGGGAAGGACGGAG) are compositionally biased toward gly residues. T215 is subject to Phosphothreonine. S229 and S232 each carry phosphoserine. The segment at 230–406 (EDSGDRGGTL…LCYAPTKDPK (177 aa)) is necessary for interaction with CBX2. Positions 235-244 (RGGTLGGGTL) are enriched in gly residues. Over residues 246–258 (PPSPPGAPSPPEP) the composition is skewed to pro residues. A phosphoserine mark is found at S248 and S254. Residues 317 to 343 (GGPGGGASDTGGPDGGGGERGVAGGGE) are compositionally biased toward gly residues.

In terms of assembly, component of chromatin-associated Polycomb (PcG) complexes. Part of the E2F6.com-1 complex in G0 phase composed of E2F6, MGA, MAX, TFDP1, CBX3, BAT8, EUHMTASE1, RING1, RNF2/RING2 MBLR, L3MBTL2 and YAF2. Interacts with CBX2 and PCGF6. Component of a PRC1-like complex. Component of repressive BCOR complex containing Polycomb group subcomplex at least composed of RYBP, PCGF1, BCOR and RNF2/RING2. Interacts with PHC2, PCGF2, RNF2; CBX6, CBX7 and CBX8. Interacts with BMI1. Interacts with MN1. Interacts with USP26.

The protein resides in the nucleus speckle. The catalysed reaction is S-ubiquitinyl-[E2 ubiquitin-conjugating enzyme]-L-cysteine + [acceptor protein]-L-lysine = [E2 ubiquitin-conjugating enzyme]-L-cysteine + N(6)-ubiquitinyl-[acceptor protein]-L-lysine.. It functions in the pathway protein modification; protein ubiquitination. In terms of biological role, constitutes one of the E3 ubiquitin-protein ligases that mediate monoubiquitination of 'Lys-119' of histone H2A, thereby playing a central role in histone code and gene regulation. H2A 'Lys-119' ubiquitination gives a specific tag for epigenetic transcriptional repression and participates in X chromosome inactivation of female mammals. Essential component of a Polycomb group (PcG) multiprotein PRC1-like complex, a complex class required to maintain the transcriptionally repressive state of many genes, including Hox genes, throughout development. PcG PRC1 complex acts via chromatin remodeling and modification of histones, rendering chromatin heritably changed in its expressibility. Compared to RNF2/RING2, it does not have the main E3 ubiquitin ligase activity on histone H2A, and it may rather act as a modulator of RNF2/RING2 activity. The protein is E3 ubiquitin-protein ligase RING1 of Mus musculus (Mouse).